Here is a 129-residue protein sequence, read N- to C-terminus: Small ribosomal subunit protein eS8 (129 aa).

The segment at 1 to 29 is disordered; it reads MSVWQGRSRRKPTGGLYRPARKKRKYEMG.

It belongs to the eukaryotic ribosomal protein eS8 family. As to quaternary structure, part of the 30S ribosomal subunit.

This Methanocaldococcus jannaschii (strain ATCC 43067 / DSM 2661 / JAL-1 / JCM 10045 / NBRC 100440) (Methanococcus jannaschii) protein is Small ribosomal subunit protein eS8 (rps8e).